Reading from the N-terminus, the 110-residue chain is IQ domain-containing protein J (110 aa).

Residues 47–67 form the IQ domain; sequence ESKVKIIQRAWREYLQRQDPL. Residues 63-99 form a disordered region; that stretch reads RQDPLEKRSPSPPSVSSDKLSSSVSMNTFSDSSTPVS. The span at 76–87 shows a compositional bias: low complexity; it reads SVSSDKLSSSVS. Over residues 88-99 the composition is skewed to polar residues; sequence MNTFSDSSTPVS.

This is IQ domain-containing protein J from Mus musculus (Mouse).